The sequence spans 387 residues: NifS-like protein (387 aa).

Pyridoxal 5'-phosphate contacts are provided by residues 58 to 59 (SE) and 184 to 186 (SIN).

Belongs to the class-V pyridoxal-phosphate-dependent aminotransferase family. NifS/IscS subfamily. Requires pyridoxal 5'-phosphate as cofactor.

The protein localises to the virion. This chain is NifS-like protein, found in African swine fever virus (isolate Tick/South Africa/Pretoriuskop Pr4/1996) (ASFV).